A 717-amino-acid polypeptide reads, in one-letter code: SAGA factor-like TAF6 (717 aa).

Positions Lys-123–Ser-204 are sufficient for interaction with Taf9.

This sequence belongs to the TAF6 family. Component of the Spt-Ada-Gcn5 acetyltransferase (SAGA) complex consisting of wda/Taf5L, Saf6, Taf9, Taf10b, Taf12, Ada1, Spt3, Spt7, Spt20, Sf3b3, Sf3b5, Nipped-A/Tra1, a histone acetyltransferase (HAT) module made up of Gcn5, Ada2b (Isoform B), Ada3 and Sgf29, and a deubiquitinase (DUB) module made up of not/nonstop, Sgf11 and e(y)2 tethered to SAGA by Atxn7; not essential for SAGA complex assembly, histone-modifying activity or chromosomal recruitment. Interacts (via N-terminal histone-fold domain) with Taf9 (via N-terminal histone-fold domain); the interaction is probably direct. Probably forms a histone-like heterooctamer structure with Taf9, Taf12 and Taf10b.

Its subcellular location is the nucleus. It localises to the chromosome. Its function is as follows. Component of the transcription regulatory complex SAGA, a multiprotein complex that activates transcription by remodeling chromatin and mediating histone acetylation and deubiquitination. The SAGA complex predominantly acetylates histone H3. Involved in SAGA complex coactivator function but not essential for SAGA complex assembly, histone-modifying activity or chromosomal recruitment. Required for oogenesis; involved in transcriptional activation. This chain is SAGA factor-like TAF6, found in Drosophila melanogaster (Fruit fly).